Reading from the N-terminus, the 876-residue chain is Valine--tRNA ligase (876 aa).

The 'HIGH' region motif lies at 44–54 (PNVTGKLHLGH). The short motif at 520–524 (KMSKS) is the 'KMSKS' region element. Lys-523 is a binding site for ATP. A coiled-coil region spans residues 805–876 (LEGLIDMDKE…VKARIEQLKA (72 aa)).

This sequence belongs to the class-I aminoacyl-tRNA synthetase family. ValS type 1 subfamily. In terms of assembly, monomer.

It is found in the cytoplasm. It carries out the reaction tRNA(Val) + L-valine + ATP = L-valyl-tRNA(Val) + AMP + diphosphate. Its function is as follows. Catalyzes the attachment of valine to tRNA(Val). As ValRS can inadvertently accommodate and process structurally similar amino acids such as threonine, to avoid such errors, it has a 'posttransfer' editing activity that hydrolyzes mischarged Thr-tRNA(Val) in a tRNA-dependent manner. The protein is Valine--tRNA ligase of Staphylococcus aureus (strain MRSA252).